Reading from the N-terminus, the 347-residue chain is MFAKQIDIHWQKMKGIKFLHWLLGTVLLWVSLSTPALAIPALDYNPWEAIQLPTTATILDMSFIDRHHGWLVGVNATLMETRDGGQTWEPRTLVLDHSDYRFNSVSFQGNEGWIVGEPPIMLHTTDGGQSWSQIPLDPKLPGSPRLIKALGNGSAEMITNVGAIYRTKDSGKNWQALVQEAIGVMRNLNRSPSGEYVAVSSRGSFYSTWEPGQTAWEPHNRTTSRRLHNMGFTPDGRLWMIVNGGKIAFSDPDNSENWGELLSPLRRNSVGFLDLAYRTPNEVWLAGGAGALLCSQDGGQTWQQDVDVKKVPSNFYKILFFSPDQGFILGQKGILLRYVTDLTAAPA.

The first 38 residues, 1–38, serve as a signal peptide directing secretion; that stretch reads MFAKQIDIHWQKMKGIKFLHWLLGTVLLWVSLSTPALA. Positions 202–226 match the Arg-rich patch motif; it reads RGSFYSTWEPGQTAWEPHNRTTSRR.

This sequence belongs to the Ycf48 family. As to quaternary structure, interacts with the D1 protein (crystallized with PsbA1 or PsbA3), via the latter's C-terminal prepropeptide, may interact with parts of the mature D1 protein as well.

It localises to the cellular thylakoid lumen. Its function is as follows. A factor required for optimal assembly of photosystem II (PSII), acting in the early stages of PSII assembly. Also plays a role in replacement of photodamaged D1 (psbA). Assists YidC in synthesis of chlorophyll-binding proteins. In Thermosynechococcus vestitus (strain NIES-2133 / IAM M-273 / BP-1), this protein is Photosystem II assembly protein Ycf48.